The primary structure comprises 305 residues: NDP-polyphosphate phosphotransferase 1 (305 aa).

This sequence belongs to the polyphosphate kinase 2 (PPK2) family. Class I subfamily.

The catalysed reaction is [phosphate](n) + ATP = [phosphate](n+1) + ADP. It carries out the reaction [phosphate](n) + CTP = [phosphate](n+1) + CDP. It catalyses the reaction [phosphate](n) + GTP = [phosphate](n+1) + GDP. The enzyme catalyses [phosphate](n) + UTP = [phosphate](n+1) + UDP. Its activity is regulated as follows. Shows little dependence on metals. Functionally, uses inorganic polyphosphate (polyP) as a donor to convert NDP to NTP. PolyP hydrolysis is slightly faster with GDP, but it can also use ADP, CDP and UDP. This chain is NDP-polyphosphate phosphotransferase 1, found in Ruegeria pomeroyi (strain ATCC 700808 / DSM 15171 / DSS-3) (Silicibacter pomeroyi).